The following is a 416-amino-acid chain: MATEPPSPLRVEAPGPPEMRTSPAIESTPEGTPQPAGGRLRFLNGCVPLSHQVAGHMYGKDKVGILQHPDGTVLKQLQPPPRGPRELEFYNMVYAADCFDGVLLELRKYLPKYYGIWSPPTAPNDLYLKLEDVTHKFNKPCIMDVKIGQKSYDPFASSEKIQQQVSKYPLMEEIGFLVLGMRVYHVHSDSYETENQHYGRSLTKETIKDGVSRFFHNGYCLRKDAVAASIQKIEKILQWFENQKQLNFYASSLLFVYEGSSQPTTTKLNDRTLAEKFLSKGQLSDTEVLEYNNNFHVLSSTANGKIESSVGKSLSKMYARHRKIYTKKHHSQTSLKVENLEQDNGWKSMSQEHLNGNVLSQLEKVFYHLPTGCQEIAEVEVRMIDFAHVFPSNTIDEGYVYGLKHLISVLRSILDN.

Residues 1–38 (MATEPPSPLRVEAPGPPEMRTSPAIESTPEGTPQPAGG) are disordered. Ala2 is subject to N-acetylalanine. Ser7 carries the post-translational modification Phosphoserine. Residue Lys75 participates in ATP binding. Residue Arg82 coordinates substrate. Residues 131-133 (EDV) and Asp144 contribute to the ATP site. Residues Lys146, 160–167 (KIQQQVSK), and Gln196 each bind substrate. The short motif at 320–330 (RHRKIYTKKHH) is the Nuclear localization signal element. Asp385 is an ATP binding site. His388 lines the substrate pocket.

Belongs to the inositol phosphokinase (IPK) family. It depends on Mg(2+) as a cofactor. Ubiquitous, with the highest expression in skeletal muscle, liver, placenta, lung, peripheral blood leukocytes, kidney, spleen and colon.

Its subcellular location is the nucleus. It catalyses the reaction 1D-myo-inositol 1,4,5-trisphosphate + 2 ATP = 1D-myo-inositol 1,3,4,5,6-pentakisphosphate + 2 ADP + 2 H(+). The catalysed reaction is 1D-myo-inositol 1,3,4,6-tetrakisphosphate + ATP = 1D-myo-inositol 1,3,4,5,6-pentakisphosphate + ADP + H(+). It carries out the reaction 1-octadecanoyl-2-(5Z,8Z,11Z,14Z)-eicosatetraenoyl-sn-glycero-3-phospho-1D-myo-inositol 4,5-bisphosphate + ATP = 1-octadecanoyl-2-(5Z,8Z,11Z,14Z-eicosatetraenoyl)-sn-glycero-3-phospho-(1D-myo-inositol 3,4,5-triphosphate) + ADP + H(+). The enzyme catalyses a 1,2-diacyl-sn-glycero-3-phospho-(1D-myo-inositol-4,5-bisphosphate) + ATP = a 1,2-diacyl-sn-glycero-3-phospho-(1D-myo-inositol-3,4,5-trisphosphate) + ADP + H(+). It catalyses the reaction 1D-myo-inositol 1,4,5,6-tetrakisphosphate + ATP = 1D-myo-inositol 1,3,4,5,6-pentakisphosphate + ADP + H(+). It participates in phospholipid metabolism; phosphatidylinositol metabolism. Its activity is regulated as follows. Inhibited by flavonoids that occupy the ATP-binding pocket. Inhibited by myricetin, quercetin, luteolin, kaempferol, isorhamnetin and diosmetin, and to a lesser degree by rhamnetin and apigenin. Its function is as follows. Inositol phosphate kinase with a broad substrate specificity. Phosphorylates inositol 1,4,5-trisphosphate (Ins(1,4,5)P3) first to inositol 1,3,4,5-tetrakisphosphate and then to inositol 1,3,4,5,6-pentakisphosphate (Ins(1,3,4,5,6)P5). Phosphorylates inositol 1,3,4,6-tetrakisphosphate (Ins(1,3,4,6)P4). Phosphorylates inositol 1,4,5,6-tetrakisphosphate (Ins(1,4,5,6)P4). Phosphorylates glycero-3-phospho-1D-myo-inositol 4,5-bisphosphate to glycero-3-phospho-1D-myo-inositol 3,4,5-trisphosphate. Plays an important role in MLKL-mediated necroptosis via its role in the biosynthesis of inositol pentakisphosphate (InsP5) and inositol hexakisphosphate (InsP6). Binding of these highly phosphorylated inositol phosphates to MLKL mediates the release of an N-terminal auto-inhibitory region, leading to activation of the kinase. Essential for activated phospho-MLKL to oligomerize and localize to the cell membrane during necroptosis. Required for normal embryonic development, probably via its role in the biosynthesis of inositol 1,3,4,5,6-pentakisphosphate (Ins(1,3,4,5,6)P5) and inositol hexakisphosphate (InsP6). This Homo sapiens (Human) protein is Inositol polyphosphate multikinase (IPMK).